The sequence spans 691 residues: Elongation factor G (691 aa).

The region spanning 8–282 (ERVRNIGIAA…AVVDYLPAPV (275 aa)) is the tr-type G domain. GTP is bound by residues 17–24 (AHIDAGKT), 81–85 (DTPGH), and 135–138 (NKMD).

The protein belongs to the TRAFAC class translation factor GTPase superfamily. Classic translation factor GTPase family. EF-G/EF-2 subfamily.

Its subcellular location is the cytoplasm. In terms of biological role, catalyzes the GTP-dependent ribosomal translocation step during translation elongation. During this step, the ribosome changes from the pre-translocational (PRE) to the post-translocational (POST) state as the newly formed A-site-bound peptidyl-tRNA and P-site-bound deacylated tRNA move to the P and E sites, respectively. Catalyzes the coordinated movement of the two tRNA molecules, the mRNA and conformational changes in the ribosome. This chain is Elongation factor G, found in Prochlorococcus marinus (strain AS9601).